Here is a 666-residue protein sequence, read N- to C-terminus: DNA ligase (666 aa).

Residues 31 to 35 (DYDFD), 80 to 81 (SL), and Glu-111 contribute to the NAD(+) site. Lys-113 acts as the N6-AMP-lysine intermediate in catalysis. Arg-134, Glu-170, Lys-285, and Lys-309 together coordinate NAD(+). Zn(2+) is bound by residues Cys-403, Cys-406, Cys-421, and Cys-427. The 80-residue stretch at 587–666 (VVSNKLLGKI…ESDFSALLTS (80 aa)) folds into the BRCT domain.

It belongs to the NAD-dependent DNA ligase family. LigA subfamily. Mg(2+) is required as a cofactor. Requires Mn(2+) as cofactor.

It catalyses the reaction NAD(+) + (deoxyribonucleotide)n-3'-hydroxyl + 5'-phospho-(deoxyribonucleotide)m = (deoxyribonucleotide)n+m + AMP + beta-nicotinamide D-nucleotide.. Functionally, DNA ligase that catalyzes the formation of phosphodiester linkages between 5'-phosphoryl and 3'-hydroxyl groups in double-stranded DNA using NAD as a coenzyme and as the energy source for the reaction. It is essential for DNA replication and repair of damaged DNA. The chain is DNA ligase from Flavobacterium psychrophilum (strain ATCC 49511 / DSM 21280 / CIP 103535 / JIP02/86).